The sequence spans 389 residues: Curcumin synthase 1 (389 aa).

The active site involves C164.

The protein belongs to the thiolase-like superfamily. Chalcone/stilbene synthases family. Homodimer. In terms of tissue distribution, expressed in both the leaf and rhizome, with higher expression in the rhizome.

The enzyme catalyses (E)-feruloylacetyl-CoA + (E)-feruloyl-CoA + H2O = curcumin + CO2 + 2 CoA. Its pathway is secondary metabolite biosynthesis; flavonoid biosynthesis. Functionally, catalyzes the synthesis of curcumin by condensing feruloyl-CoA with a diketide-CoA in the curcuminoid biosynthesis. The sequence is that of Curcumin synthase 1 (CURS1) from Curcuma longa (Turmeric).